We begin with the raw amino-acid sequence, 244 residues long: Protein TIFY 10b (244 aa).

Positions Gln97–Lys132 constitute a Tify domain. Residues Pro185–Gln210 carry the Jas motif. The short motif at Ala187 to Arg194 is the Nuclear localization signal element. The segment at His193–Gln244 is disordered. A compositionally biased stretch (basic and acidic residues) spans Arg194 to Asn204.

It belongs to the TIFY/JAZ family. In terms of processing, ubiquitinated. Targeted for degradation by the SCF(COI1) E3 ubiquitin ligase-proteasome pathway during jasmonate signaling.

It localises to the nucleus. In terms of biological role, repressor of jasmonate responses. This Oryza sativa subsp. indica (Rice) protein is Protein TIFY 10b.